A 354-amino-acid polypeptide reads, in one-letter code: MARRNPLLFAIVVTILFVVCYGSALIAQTPPPVDNFVASAHYGSFKKRHGKAFGGDAEEGHRFNAFKQNMQTAYFLNTQNPHAHYDVSGKFADLTPQEFAKLYLNPDYYARHLKDHKEDVHVDDSAPSGVMSVDWRDKGAVTPVKNQGLCGSCWAFSAIGNIEGQWAASGHSLVSLSEQMLVSCDNIDEGCNGGLMDQAMNWIMQSHNGSVFTEASYPYTSGGGTRPPCHDEGEVGAKITGFLSLPHDEERIAEWVEKRGPVAVAVDATTWQLYFGGVVSLCLAWSLNHGVLIVGFNKNAKPPYWIVKNSWGSSWGEKGYIRLAMGSNQCMLKNYPVSATVESPHTPHVPTTTA.

The N-terminal stretch at 1–24 is a signal peptide; the sequence is MARRNPLLFAIVVTILFVVCYGSA. Positions 25–125 are cleaved as a propeptide — activation peptide; the sequence is LIAQTPPPVD…HKEDVHVDDS (101 aa). Intrachain disulfides connect Cys150-Cys191, Cys184-Cys229, and Cys282-Cys330. Cys153 is a catalytic residue. The N-linked (GlcNAc...) asparagine glycan is linked to Asn208. Catalysis depends on residues His289 and Asn309.

The protein belongs to the peptidase C1 family.

Functionally, the cysteine proteinases have a potential role in host-parasite interaction and virulence. The polypeptide is Cysteine proteinase 1 (CYS1) (Leishmania pifanoi).